A 409-amino-acid chain; its full sequence is Cuticle-degrading serine protease (409 aa).

The first 21 residues, 1 to 21 (MLTNGLISLLAIAGLATNAFA), serve as a signal peptide directing secretion. Positions 22-123 (GPIRKVSNAG…VEQDTVVTTY (102 aa)) are excised as a propeptide. One can recognise an Inhibitor I9 domain in the interval 39-122 (KYIVVLKKGL…YVEQDTVVTT (84 aa)). Residues 130-409 (TWGLDRISHE…PNKIAYNGYA (280 aa)) form the Peptidase S8 domain. The active-site Charge relay system is the aspartate 164. Asparagine 178 is a glycosylation site (N-linked (GlcNAc...) asparagine). Catalysis depends on histidine 200, which acts as the Charge relay system. The N-linked (GlcNAc...) asparagine glycan is linked to asparagine 252. Serine 353 acts as the Charge relay system in catalysis.

It belongs to the peptidase S8 family.

The protein localises to the secreted. Inhibited by PMSF, SSI, the peptide Phe-Val and by Phe, but not by EDTA. In terms of biological role, hydrolyzes gelatin, casein, the chromogenic substrate azocoll and the cuticle of the nematode P.redivivus. Immobilizes P.redivivus. This chain is Cuticle-degrading serine protease, found in Arthrobotrys oligospora (strain ATCC 24927 / CBS 115.81 / DSM 1491) (Nematode-trapping fungus).